We begin with the raw amino-acid sequence, 166 residues long: UPF0254 protein Mevan_0254 (166 aa).

Belongs to the UPF0254 family.

This is UPF0254 protein Mevan_0254 from Methanococcus vannielii (strain ATCC 35089 / DSM 1224 / JCM 13029 / OCM 148 / SB).